The chain runs to 2077 residues: Large tegument protein deneddylase (2077 aa).

Residues 1-231 form a deubiquitination activity region; sequence MKIITSSTNQ…PDIAIALDKF (231 aa). A Peptidase C76 domain is found at 3–221; the sequence is IITSSTNQND…ELLILKTYKD (219 aa). Active-site residues include cysteine 23, aspartate 156, and histidine 158. Serine 287 is a region of interest (interaction with inner tegument protein). The tract at residues 1982–2004 is disordered; that stretch reads PPNNTESTRPGKQTSETLTNKNL.

Belongs to the herpesviridae large tegument protein family. In terms of assembly, interacts with host CUL1 and CUL4A; these interactions inhibit the E3 ligase activity of cullins. Interacts with inner tegument protein. Interacts with capsid vertex specific component CVC2. Interacts with the major capsid protein/MCP.

The protein localises to the virion tegument. It localises to the host cytoplasm. It is found in the host nucleus. It carries out the reaction Thiol-dependent hydrolysis of ester, thioester, amide, peptide and isopeptide bonds formed by the C-terminal Gly of ubiquitin (a 76-residue protein attached to proteins as an intracellular targeting signal).. Its function is as follows. Large tegument protein that plays multiple roles in the viral cycle. During viral entry, remains associated with the capsid while most of the tegument is detached and participates in the capsid transport toward the host nucleus. Plays a role in the routing of the capsid at the nuclear pore complex and subsequent uncoating. Within the host nucleus, acts as a deneddylase and promotes the degradation of nuclear CRLs (cullin-RING ubiquitin ligases) and thereby stabilizes nuclear CRL substrates, while cytoplasmic CRLs remain unaffected. These modifications prevent host cell cycle S-phase progression and create a favorable environment allowing efficient viral genome replication. Participates later in the secondary envelopment of capsids. Indeed, plays a linker role for the association of the outer viral tegument to the capsids together with the inner tegument protein. The protein is Large tegument protein deneddylase (U31) of Homo sapiens (Human).